The primary structure comprises 496 residues: Genome polyprotein (496 aa).

At Ser1 to Ser447 the chain is on the extracellular side. 6 disulfide bridges follow: Cys3–Cys30, Cys60–Cys116, Cys60–Cys121, Cys74–Cys105, Cys92–Cys116, and Cys92–Cys121. Residues Asp98–Gly111 form a fusion peptide region. Asn154 carries an N-linked (GlcNAc...) asparagine; by host glycan. 2 disulfide bridges follow: Cys186/Cys290 and Cys307/Cys338. Residues Ile448–Gly468 traverse the membrane as a helical segment. Residues Leu469–Ser479 lie on the Cytoplasmic side of the membrane. A helical membrane pass occupies residues Phe480 to Ala496.

In terms of assembly, homodimer; in the endoplasmic reticulum and Golgi. In terms of processing, N-glycosylated.

It is found in the virion membrane. The protein localises to the host endoplasmic reticulum membrane. Its function is as follows. Binds to host cell surface receptor and mediates fusion between viral and cellular membranes. Envelope protein is synthesized in the endoplasmic reticulum in the form of heterodimer with protein prM. They play a role in virion budding in the ER, and the newly formed immature particle is covered with 60 spikes composed of heterodimer between precursor prM and envelope protein E. The virion is transported to the Golgi apparatus where the low pH causes dissociation of PrM-E heterodimers and formation of E homodimers. prM-E cleavage is ineficient, and many virions are only partially matured. These uncleaved prM would play a role in immune evasion. This chain is Genome polyprotein, found in Louping ill virus (strain Negishi 3248/49/P10) (Li).